The primary structure comprises 240 residues: tRNA pseudouridine synthase B (240 aa).

D48 functions as the Nucleophile in the catalytic mechanism.

This sequence belongs to the pseudouridine synthase TruB family. Type 1 subfamily.

It catalyses the reaction uridine(55) in tRNA = pseudouridine(55) in tRNA. In terms of biological role, responsible for synthesis of pseudouridine from uracil-55 in the psi GC loop of transfer RNAs. This chain is tRNA pseudouridine synthase B, found in Bacteroides thetaiotaomicron (strain ATCC 29148 / DSM 2079 / JCM 5827 / CCUG 10774 / NCTC 10582 / VPI-5482 / E50).